The chain runs to 63 residues: DNA-directed RNA polymerase 7 kDa subunit (63 aa).

Belongs to the poxviridae DNA-directed RNA polymerase 7 kDa subunit family. As to quaternary structure, the DNA-dependent RNA polymerase (vRNAP) consists of eight subunits encoded by early viral genes and termed according to their apparent molecular masses Rpo147, Rpo132, Rpo35, Rpo30, Rpo22, Rpo19, Rpo18, and Rpo7. The same holoenzyme, with the addition of the transcription-specificity factor RAP94, is used for early gene expression.

The protein localises to the virion. The enzyme catalyses RNA(n) + a ribonucleoside 5'-triphosphate = RNA(n+1) + diphosphate. Functionally, part of the DNA-dependent RNA polymerase which catalyzes the transcription of viral DNA into RNA using the four ribonucleoside triphosphates as substrates. Responsible for the transcription of early, intermediate and late genes. DNA-dependent RNA polymerase associates with the early transcription factor (ETF), itself composed of OPG118 and OPG134, thereby allowing the early genes transcription. Late transcription, and probably also intermediate transcription, require newly synthesized RNA polymerase. The sequence is that of DNA-directed RNA polymerase 7 kDa subunit (OPG090) from Homo sapiens (Human).